The chain runs to 183 residues: Nucleoside diphosphate kinase (183 aa).

An ATP-binding site is contributed by lysine 11. The interval 56 to 88 (EWLRSAGQKLLKAYQELGIDPRAKIGTDDPVEV) is insert. Arginine 120, threonine 126, arginine 137, and asparagine 157 together coordinate ATP. The active-site Pros-phosphohistidine intermediate is histidine 160.

The protein belongs to the NDK family. Requires Mg(2+) as cofactor.

It localises to the cytoplasm. It carries out the reaction a 2'-deoxyribonucleoside 5'-diphosphate + ATP = a 2'-deoxyribonucleoside 5'-triphosphate + ADP. It catalyses the reaction a ribonucleoside 5'-diphosphate + ATP = a ribonucleoside 5'-triphosphate + ADP. Its function is as follows. Major role in the synthesis of nucleoside triphosphates other than ATP. The ATP gamma phosphate is transferred to the NDP beta phosphate via a ping-pong mechanism, using a phosphorylated active-site intermediate. The protein is Nucleoside diphosphate kinase (ndk) of Pyrobaculum aerophilum (strain ATCC 51768 / DSM 7523 / JCM 9630 / CIP 104966 / NBRC 100827 / IM2).